Here is a 101-residue protein sequence, read N- to C-terminus: ATP-dependent Clp protease adapter protein ClpS (101 aa).

The protein belongs to the ClpS family. As to quaternary structure, binds to the N-terminal domain of the chaperone ClpA.

In terms of biological role, involved in the modulation of the specificity of the ClpAP-mediated ATP-dependent protein degradation. The chain is ATP-dependent Clp protease adapter protein ClpS from Corynebacterium efficiens (strain DSM 44549 / YS-314 / AJ 12310 / JCM 11189 / NBRC 100395).